Here is a 422-residue protein sequence, read N- to C-terminus: Glutamate-1-semialdehyde 2,1-aminomutase (422 aa).

Lys264 carries the post-translational modification N6-(pyridoxal phosphate)lysine.

It belongs to the class-III pyridoxal-phosphate-dependent aminotransferase family. HemL subfamily. Homodimer. Requires pyridoxal 5'-phosphate as cofactor.

The protein localises to the cytoplasm. It carries out the reaction (S)-4-amino-5-oxopentanoate = 5-aminolevulinate. It participates in porphyrin-containing compound metabolism; protoporphyrin-IX biosynthesis; 5-aminolevulinate from L-glutamyl-tRNA(Glu): step 2/2. This is Glutamate-1-semialdehyde 2,1-aminomutase from Clostridium tetani (strain Massachusetts / E88).